A 265-amino-acid chain; its full sequence is Eukaryotic translation initiation factor 3 subunit J (265 aa).

The tract at residues 1–71 (MSWDDEAING…KESSADRALL (71 aa)) is disordered. Residues 23 to 32 (WDAEIGDDEP) are compositionally biased toward acidic residues. Residues 42–71 (EEKKPAPKPKKEQPKKVKKGKESSADRALL) show a composition bias toward basic and acidic residues. Phosphoserine is present on serine 65. The residue at position 75 (threonine 75) is a Phosphothreonine. Serine 92 is modified (phosphoserine). The segment at 219–265 (VRGGTATGGAGKKKVKGKTNLGGAFKKDQDFDLDGPDDFEFGDDDFM) is disordered. Omega-N-methylarginine is present on arginine 220. A compositionally biased stretch (acidic residues) spans 249–265 (FDLDGPDDFEFGDDDFM).

The protein belongs to the eIF-3 subunit J family. In terms of assembly, probable component of the eukaryotic translation initiation factor 3 (eIF-3) complex. Is not part of the eIF-3 core complex, with which it is associated in substochiometric amounts.

It localises to the cytoplasm. Its function is as follows. Component of the eukaryotic translation initiation factor 3 (eIF-3) complex, which is involved in protein synthesis of a specialized repertoire of mRNAs and, together with other initiation factors, stimulates binding of mRNA and methionyl-tRNAi to the 40S ribosome. The eIF-3 complex specifically targets and initiates translation of a subset of mRNAs involved in cell proliferation. The chain is Eukaryotic translation initiation factor 3 subunit J from Saccharomyces cerevisiae (strain ATCC 204508 / S288c) (Baker's yeast).